We begin with the raw amino-acid sequence, 394 residues long: Chorismate synthase (394 aa).

2 residues coordinate NADP(+): arginine 40 and arginine 46. FMN is bound by residues 135–137 (RAS), 255–256 (QA), glycine 302, 317–321 (KPISS), and arginine 343.

Belongs to the chorismate synthase family. As to quaternary structure, homotetramer. The cofactor is FMNH2.

The enzyme catalyses 5-O-(1-carboxyvinyl)-3-phosphoshikimate = chorismate + phosphate. It participates in metabolic intermediate biosynthesis; chorismate biosynthesis; chorismate from D-erythrose 4-phosphate and phosphoenolpyruvate: step 7/7. Catalyzes the anti-1,4-elimination of the C-3 phosphate and the C-6 proR hydrogen from 5-enolpyruvylshikimate-3-phosphate (EPSP) to yield chorismate, which is the branch point compound that serves as the starting substrate for the three terminal pathways of aromatic amino acid biosynthesis. This reaction introduces a second double bond into the aromatic ring system. The polypeptide is Chorismate synthase (Frankia alni (strain DSM 45986 / CECT 9034 / ACN14a)).